Here is a 697-residue protein sequence, read N- to C-terminus: Glycine--tRNA ligase beta subunit (697 aa).

This sequence belongs to the class-II aminoacyl-tRNA synthetase family. Tetramer of two alpha and two beta subunits.

It localises to the cytoplasm. It catalyses the reaction tRNA(Gly) + glycine + ATP = glycyl-tRNA(Gly) + AMP + diphosphate. This Ralstonia nicotianae (strain ATCC BAA-1114 / GMI1000) (Ralstonia solanacearum) protein is Glycine--tRNA ligase beta subunit.